An 858-amino-acid polypeptide reads, in one-letter code: Phospholipase D gamma 1 (858 aa).

The 137-residue stretch at 27–163 folds into the C2 domain; that stretch reads PFATSSGSLR…CSGNRIEGLF (137 aa). Asp-225 contributes to the Ca(2+) binding site. The region spanning 364–399 is the PLD phosphodiesterase 1 domain; that stretch reads TIYTHHQKTVIVDAEAAQNRRKIVAFVGGLDLCNGR. Catalysis depends on residues His-369, Lys-371, and Asp-376. His-369 is an a 1,2-diacyl-sn-glycero-3-phosphate binding site. Residues His-405 and His-437 each coordinate Ca(2+). Residue Gln-565 participates in a 1,2-diacyl-sn-glycero-3-phosphate binding. Ser-680 is modified (phosphoserine). The 28-residue stretch at 704 to 731 folds into the PLD phosphodiesterase 2 domain; sequence FMIYVHSKGMVVDDEFVLIGSANINQRS. Catalysis depends on residues His-709, Lys-711, and Asp-716. His-709 lines the a 1,2-diacyl-sn-glycero-3-phosphate pocket. Glu-772 is a Ca(2+) binding site.

The protein belongs to the phospholipase D family. C2-PLD subfamily. It depends on Ca(2+) as a cofactor. In terms of tissue distribution, highly expressed in roots and flowers, moderately in stems, leaves and seedlings and low in siliques. Not detected in seeds.

It is found in the cytoplasm. The protein resides in the membrane. The enzyme catalyses a 1,2-diacyl-sn-glycero-3-phosphocholine + H2O = a 1,2-diacyl-sn-glycero-3-phosphate + choline + H(+). With respect to regulation, inhibited by neomycin. Up-regulated by PIP2 binding. In terms of biological role, hydrolyzes glycerol-phospholipids at the terminal phosphodiesteric bond to generate phosphatidic acids (PA). Plays an important role in various cellular processes, including phytohormone action, vesicular trafficking, secretion, cytoskeletal arrangement, meiosis, tumor promotion, pathogenesis, membrane deterioration and senescence. Can use phosphatidylserine (PS) and phosphatidylethanolamine (PE) as substrates only in the presence of PIP2. Can use phosphatidylcholine (PC), phosphatidylglycerol (PG) or N-acylphosphatidylethanolamine (NAPE) as substrates in the presence of PE and PIP2. Involved in membrane lipid modulation under aluminum (Al) stress and negatively modulate plant tolerance to Al. The polypeptide is Phospholipase D gamma 1 (Arabidopsis thaliana (Mouse-ear cress)).